Consider the following 189-residue polypeptide: Apolipophorin-3 (189 aa).

The signal sequence occupies residues 1–18 (MAAKFVVVLAACVALSHS). A propeptide spanning residues 19–23 (AMVRR) is cleaved from the precursor.

This sequence belongs to the insect apolipophorin-3 family. In terms of assembly, equilibrium between a soluble monomer and a bound lipoprotein form. Apolipophorin-3 associates with lipophorin during lipid loading until each particle contains 9 or 14 molecules of apolipophorin-3. As to expression, hemolymph.

Its subcellular location is the secreted. Its function is as follows. Assists in the loading of diacylglycerol, generated from triacylglycerol stores in the fat body through the action of adipokinetic hormone, into lipophorin, the hemolymph lipoprotein. It increases the lipid carrying capacity of lipophorin by covering the expanding hydrophobic surface resulting from diacylglycerol uptake. It thus plays a critical role in the transport of lipids during flight in several species of insects. The sequence is that of Apolipophorin-3 from Manduca sexta (Tobacco hawkmoth).